We begin with the raw amino-acid sequence, 713 residues long: Ribosomal RNA large subunit methyltransferase K/L (713 aa).

In terms of domain architecture, THUMP spans 43–154; sequence LAYRITLWTR…NGVITIAMNF (112 aa).

The protein belongs to the methyltransferase superfamily. RlmKL family.

Its subcellular location is the cytoplasm. It catalyses the reaction guanosine(2445) in 23S rRNA + S-adenosyl-L-methionine = N(2)-methylguanosine(2445) in 23S rRNA + S-adenosyl-L-homocysteine + H(+). The catalysed reaction is guanosine(2069) in 23S rRNA + S-adenosyl-L-methionine = N(2)-methylguanosine(2069) in 23S rRNA + S-adenosyl-L-homocysteine + H(+). Specifically methylates the guanine in position 2445 (m2G2445) and the guanine in position 2069 (m7G2069) of 23S rRNA. The polypeptide is Ribosomal RNA large subunit methyltransferase K/L (Shewanella sp. (strain ANA-3)).